The following is a 520-amino-acid chain: Cholesterol side-chain cleavage enzyme, mitochondrial (520 aa).

A mitochondrion-targeting transit peptide spans 1-39; the sequence is MLARGLPLRSALVKACPPLLNTGREGWGHHRVGTGEGAG. Residues 27 to 48 form a disordered region; it reads WGHHRVGTGEGAGISTRTPRPY. Position 461 (cysteine 461) interacts with heme.

This sequence belongs to the cytochrome P450 family. As to quaternary structure, interacts with FDX1/adrenodoxin. Requires heme as cofactor.

Its subcellular location is the mitochondrion inner membrane. It catalyses the reaction 6 reduced [adrenodoxin] + cholesterol + 3 O2 + 6 H(+) = 4-methylpentanal + pregnenolone + 6 oxidized [adrenodoxin] + 4 H2O. The enzyme catalyses 2 reduced [adrenodoxin] + cholesterol + O2 + 2 H(+) = (22R)-hydroxycholesterol + 2 oxidized [adrenodoxin] + H2O. It carries out the reaction (22R)-hydroxycholesterol + 2 reduced [adrenodoxin] + O2 + 2 H(+) = (20R,22R)-20,22-dihydroxycholesterol + 2 oxidized [adrenodoxin] + H2O. The catalysed reaction is (20R,22R)-20,22-dihydroxycholesterol + 2 reduced [adrenodoxin] + O2 + 2 H(+) = 4-methylpentanal + pregnenolone + 2 oxidized [adrenodoxin] + 2 H2O. It functions in the pathway lipid metabolism; C21-steroid hormone metabolism. Its pathway is steroid metabolism; cholesterol metabolism. A cytochrome P450 monooxygenase that catalyzes the side-chain hydroxylation and cleavage of cholesterol to pregnenolone, the precursor of most steroid hormones. Catalyzes three sequential oxidation reactions of cholesterol, namely the hydroxylation at C22 followed with the hydroxylation at C20 to yield 20R,22R-hydroxycholesterol that is further cleaved between C20 and C22 to yield the C21-steroid pregnenolone and 4-methylpentanal. Mechanistically, uses molecular oxygen inserting one oxygen atom into a substrate and reducing the second into a water molecule. Two electrons are provided by NADPH via a two-protein mitochondrial transfer system comprising flavoprotein FDXR (adrenodoxin/ferredoxin reductase) and nonheme iron-sulfur protein FDX1 or FDX2 (adrenodoxin/ferredoxin). This chain is Cholesterol side-chain cleavage enzyme, mitochondrial, found in Capra hircus (Goat).